A 238-amino-acid polypeptide reads, in one-letter code: Heme oxygenase 1 (238 aa).

It belongs to the heme oxygenase family.

It carries out the reaction heme b + 3 reduced [NADPH--hemoprotein reductase] + 3 O2 = biliverdin IXalpha + CO + Fe(2+) + 3 oxidized [NADPH--hemoprotein reductase] + 3 H2O + H(+). Its function is as follows. Catalyzes the opening of the heme ring with the release of iron. Key enzyme in the synthesis of the chromophoric part of the photosynthetic antennae. Upon overexpression in E.coli with PCB:ferredoxin oxidoreductase, CpeS and either CpcB or PecB permits synthesis of phycocyanin-coupled CpcB or PecB. The sequence is that of Heme oxygenase 1 (pbsA1) from Nostoc sp. (strain PCC 7120 / SAG 25.82 / UTEX 2576).